The primary structure comprises 892 residues: DNA mismatch repair protein MutS (892 aa).

ATP is bound at residue 607 to 614; sequence GPNMSGKS.

This sequence belongs to the DNA mismatch repair MutS family.

Functionally, this protein is involved in the repair of mismatches in DNA. It is possible that it carries out the mismatch recognition step. This protein has a weak ATPase activity. The protein is DNA mismatch repair protein MutS of Bacillus cereus (strain AH820).